A 262-amino-acid polypeptide reads, in one-letter code: Tetratricopeptide repeat protein 33 (262 aa).

TPR repeat units follow at residues 59–92, 93–126, and 127–160; these read SKQL…TPND, ATLY…NPHS, and WESW…YPMN. Residue Ser197 is modified to Phosphoserine. Thr251 is subject to Phosphothreonine.

In Homo sapiens (Human), this protein is Tetratricopeptide repeat protein 33 (TTC33).